The chain runs to 378 residues: Chaperone protein DnaJ (378 aa).

Residues 4–68 (DFYEILGVSR…ETRARYDRFG (65 aa)) form the J domain. Residues 136–218 (GGEKEIRIPH…CGGAGRKQET (83 aa)) form a CR-type zinc finger. Residues Cys-149, Cys-152, Cys-166, Cys-169, Cys-192, Cys-195, Cys-206, and Cys-209 each contribute to the Zn(2+) site. CXXCXGXG motif repeat units follow at residues 149-156 (CKTCSGSG), 166-173 (CGTCNGTG), 192-199 (CPTCNGEG), and 206-213 (CESCGGAG).

It belongs to the DnaJ family. As to quaternary structure, homodimer. Zn(2+) is required as a cofactor.

It localises to the cytoplasm. Participates actively in the response to hyperosmotic and heat shock by preventing the aggregation of stress-denatured proteins and by disaggregating proteins, also in an autonomous, DnaK-independent fashion. Unfolded proteins bind initially to DnaJ; upon interaction with the DnaJ-bound protein, DnaK hydrolyzes its bound ATP, resulting in the formation of a stable complex. GrpE releases ADP from DnaK; ATP binding to DnaK triggers the release of the substrate protein, thus completing the reaction cycle. Several rounds of ATP-dependent interactions between DnaJ, DnaK and GrpE are required for fully efficient folding. Also involved, together with DnaK and GrpE, in the DNA replication of plasmids through activation of initiation proteins. This chain is Chaperone protein DnaJ, found in Picosynechococcus sp. (strain ATCC 27264 / PCC 7002 / PR-6) (Agmenellum quadruplicatum).